The primary structure comprises 630 residues: Putative lipase atg15 (630 aa).

Topologically, residues 1–20 (MKSSQRRIKRHAMRDMSIST) are cytoplasmic. Residues 21 to 40 (LLLSVVLLPSVVSANDHVYF) traverse the membrane as a helical; Signal-anchor for type II membrane protein segment. Over 41–630 (NPPSPGSPFL…WGSDIEHYEI (590 aa)) the chain is Lumenal. N-linked (GlcNAc...) asparagine glycans are attached at residues Asn200, Asn222, Asn280, and Asn304. Ser320 functions as the Charge relay system in the catalytic mechanism. N-linked (GlcNAc...) asparagine glycosylation is present at Asn466. The span at 577–589 (SVTAPPFSTSTSS) shows a compositional bias: polar residues. The segment at 577–599 (SVTAPPFSTSTSSDHVRADHSIG) is disordered.

It belongs to the AB hydrolase superfamily. Lipase family. Binds to both phosphatidylinositol (PI) and phosphatidylinositol 3,5-bisphosphate (PIP2).

The protein resides in the endosome. Its subcellular location is the multivesicular body membrane. It is found in the prevacuolar compartment membrane. The enzyme catalyses a triacylglycerol + H2O = a diacylglycerol + a fatty acid + H(+). Lipase which is essential for lysis of subvacuolar cytoplasm to vacuole targeted bodies and intravacuolar autophagic bodies. Involved in the lysis of intravacuolar multivesicular body (MVB) vesicles. The intravacuolar membrane disintegration by atg15 is critical to life span extension. The protein is Putative lipase atg15 (atg15) of Aspergillus clavatus (strain ATCC 1007 / CBS 513.65 / DSM 816 / NCTC 3887 / NRRL 1 / QM 1276 / 107).